Consider the following 180-residue polypeptide: Adenine phosphoribosyltransferase (180 aa).

Belongs to the purine/pyrimidine phosphoribosyltransferase family. As to quaternary structure, homodimer.

It is found in the cytoplasm. It carries out the reaction AMP + diphosphate = 5-phospho-alpha-D-ribose 1-diphosphate + adenine. It participates in purine metabolism; AMP biosynthesis via salvage pathway; AMP from adenine: step 1/1. In terms of biological role, catalyzes a salvage reaction resulting in the formation of AMP, that is energically less costly than de novo synthesis. The sequence is that of Adenine phosphoribosyltransferase from Mycoplasma genitalium (strain ATCC 33530 / DSM 19775 / NCTC 10195 / G37) (Mycoplasmoides genitalium).